Consider the following 185-residue polypeptide: Probable E3 ubiquitin-protein ligase ATL44 (185 aa).

A helical transmembrane segment spans residues 29 to 49 (VVILSALLCALICVAGLAAVV). The RING-type; atypical zinc finger occupies 102 to 144 (CAICLTDFADGEEIRVLPLCGHSFHVECIDKWLVSRSSCPSCR). A disordered region spans residues 163-185 (MKDQAHRHQHHQHSSTTIPTFLP). The segment covering 176–185 (SSTTIPTFLP) has biased composition (polar residues).

It belongs to the RING-type zinc finger family. ATL subfamily. As to quaternary structure, interacts with BIK1. Auto-monoubiquitination. As to expression, expressed in stems, flowers and green siliques.

It is found in the membrane. It carries out the reaction S-ubiquitinyl-[E2 ubiquitin-conjugating enzyme]-L-cysteine + [acceptor protein]-L-lysine = [E2 ubiquitin-conjugating enzyme]-L-cysteine + N(6)-ubiquitinyl-[acceptor protein]-L-lysine.. It functions in the pathway protein modification; protein ubiquitination. Functionally, E3 ubiquitin-protein ligase that possess E3 ubiquitin ligase activity in vitro and mediates protein monoubiquitination. Triggers the monoubiquitination of phosphorylated BIK1 in response to pathogen-associated molecular pattern (PAMP) detection. The sequence is that of Probable E3 ubiquitin-protein ligase ATL44 from Arabidopsis thaliana (Mouse-ear cress).